A 510-amino-acid chain; its full sequence is MAVGNGVLLHIARSLMLFFHVQKLVQYLWMNSRRHRLPPGPIGWPVLGALPLLGTMPHVALANMAKKYGPVMYLKVGSCGLAVASTPEAAKAFLKTLDMNFSNRPPNAGATHLAYNAQDMVFADYGPRWKLLRKLSNIHILGGKALQGWEEVRKKELGYMLYAMAESGRHGQPVVVSEMLTYAMANMLGQVMLSKRVFGSQGSESNEFKDMVVELMTVAGYFNIGDFIPSIAWMDLQGIQGGMKRLHKKFDALLTRLLEEHTASAHERKGSPDFLDFVVANRDNSEGERLHTVNIKALLLNMFTAGTDTSSSVIEWALAELLKNPIILKRAQEEMDGVIGRDRRFLEADISKLPYLQAICKEAFRKHPSTPLNLPRIASQACEVNGHYIPKGTRLSVNIWAIGRDPSLWENPNEFNPDRFLERKNAKIDPRGNDFELIPFGAGRRICAGTRLGILLVEYILGTLVHSFDWELPSSVIELNMDEPFGLALQKAVPLAAMVTPRLPLHIYCP.

C447 provides a ligand contact to heme.

This sequence belongs to the cytochrome P450 family. Requires heme as cofactor.

The enzyme catalyses a 3',5'-unsubstituted flavanone + 2 reduced [NADPH--hemoprotein reductase] + 2 O2 = a 3',5'-dihydroxyflavanone + 2 oxidized [NADPH--hemoprotein reductase] + 2 H2O + 2 H(+). The protein operates within pigment biosynthesis; anthocyanin biosynthesis. Its function is as follows. Catalyzes the 3'5'-hydroxylation of naringenin and eriodictyol to form 5,7,3,'4',5'-pentahydroxyflavanone and 3',5'-hydroxylation of dihydrokaempferol and dihydroquercetin to form dihydromyricetin. This Eustoma exaltatum subsp. russellianum (Bluebells) protein is Flavonoid 3',5'-hydroxylase (CYP75A5).